The following is a 296-amino-acid chain: Glycine--tRNA ligase alpha subunit (296 aa).

The protein belongs to the class-II aminoacyl-tRNA synthetase family. In terms of assembly, tetramer of two alpha and two beta subunits.

The protein localises to the cytoplasm. The enzyme catalyses tRNA(Gly) + glycine + ATP = glycyl-tRNA(Gly) + AMP + diphosphate. The sequence is that of Glycine--tRNA ligase alpha subunit from Listeria monocytogenes serotype 4a (strain HCC23).